A 229-amino-acid polypeptide reads, in one-letter code: Peptidase E (229 aa).

Active-site charge relay system residues include Ser-120, Asp-135, and His-157.

The protein belongs to the peptidase S51 family.

The protein resides in the cytoplasm. The enzyme catalyses Dipeptidase E catalyzes the hydrolysis of dipeptides Asp-|-Xaa. It does not act on peptides with N-terminal Glu, Asn or Gln, nor does it cleave isoaspartyl peptides.. Hydrolyzes dipeptides containing N-terminal aspartate residues. May play a role in allowing the cell to use peptide aspartate to spare carbon otherwise required for the synthesis of the aspartate family of amino acids. The chain is Peptidase E from Shigella boydii serotype 18 (strain CDC 3083-94 / BS512).